A 218-amino-acid polypeptide reads, in one-letter code: Peptidase E (218 aa).

Residues serine 123, aspartate 138, and histidine 160 each act as charge relay system in the active site.

It belongs to the peptidase S51 family.

Its subcellular location is the cytoplasm. It carries out the reaction Dipeptidase E catalyzes the hydrolysis of dipeptides Asp-|-Xaa. It does not act on peptides with N-terminal Glu, Asn or Gln, nor does it cleave isoaspartyl peptides.. In terms of biological role, hydrolyzes dipeptides containing N-terminal aspartate residues. May play a role in allowing the cell to use peptide aspartate to spare carbon otherwise required for the synthesis of the aspartate family of amino acids. The protein is Peptidase E of Haemophilus influenzae (strain ATCC 51907 / DSM 11121 / KW20 / Rd).